The chain runs to 610 residues: Elongation factor 4 (610 aa).

Positions 11-193 (ENIRNFSIIA…QIVEKVPAPS (183 aa)) constitute a tr-type G domain. Residues 23–28 (DHGKST) and 140–143 (NKID) contribute to the GTP site.

It belongs to the TRAFAC class translation factor GTPase superfamily. Classic translation factor GTPase family. LepA subfamily.

The protein localises to the cell membrane. The catalysed reaction is GTP + H2O = GDP + phosphate + H(+). In terms of biological role, required for accurate and efficient protein synthesis under certain stress conditions. May act as a fidelity factor of the translation reaction, by catalyzing a one-codon backward translocation of tRNAs on improperly translocated ribosomes. Back-translocation proceeds from a post-translocation (POST) complex to a pre-translocation (PRE) complex, thus giving elongation factor G a second chance to translocate the tRNAs correctly. Binds to ribosomes in a GTP-dependent manner. In Streptococcus equi subsp. equi (strain 4047), this protein is Elongation factor 4.